The following is a 439-amino-acid chain: Argininosuccinate lyase (439 aa).

It belongs to the lyase 1 family. Argininosuccinate lyase subfamily.

Its subcellular location is the cytoplasm. The catalysed reaction is 2-(N(omega)-L-arginino)succinate = fumarate + L-arginine. It functions in the pathway amino-acid biosynthesis; L-arginine biosynthesis; L-arginine from L-ornithine and carbamoyl phosphate: step 3/3. The sequence is that of Argininosuccinate lyase from Caldanaerobacter subterraneus subsp. tengcongensis (strain DSM 15242 / JCM 11007 / NBRC 100824 / MB4) (Thermoanaerobacter tengcongensis).